The chain runs to 172 residues: Ribosome maturation factor RimM (172 aa).

The PRC barrel domain occupies 94–167 (EGSYYYKDII…VAHVIVPEGL (74 aa)).

Belongs to the RimM family. As to quaternary structure, binds ribosomal protein uS19.

The protein resides in the cytoplasm. Functionally, an accessory protein needed during the final step in the assembly of 30S ribosomal subunit, possibly for assembly of the head region. Essential for efficient processing of 16S rRNA. May be needed both before and after RbfA during the maturation of 16S rRNA. It has affinity for free ribosomal 30S subunits but not for 70S ribosomes. The polypeptide is Ribosome maturation factor RimM (Lacticaseibacillus paracasei (strain ATCC 334 / BCRC 17002 / CCUG 31169 / CIP 107868 / KCTC 3260 / NRRL B-441) (Lactobacillus paracasei)).